We begin with the raw amino-acid sequence, 608 residues long: Alpha-glycerophosphate oxidase (608 aa).

An FAD-binding site is contributed by 21 to 49 (DLLIIGGGITGAGVALQAAASGLETGLIE). Residues 393–418 (SAVSKLESSTSEKHLDPSAVSRGSSL) are disordered.

This sequence belongs to the FAD-dependent glycerol-3-phosphate dehydrogenase family. The cofactor is FAD.

It localises to the cell membrane. It catalyses the reaction sn-glycerol 3-phosphate + O2 = dihydroxyacetone phosphate + H2O2. It participates in membrane lipid metabolism; glycerophospholipid metabolism. The sequence is that of Alpha-glycerophosphate oxidase (glpO) from Streptococcus pneumoniae serotype 4 (strain ATCC BAA-334 / TIGR4).